The primary structure comprises 562 residues: Serine palmitoyltransferase 2 (562 aa).

Residues 67 to 87 (PMLVAVLTYVGYGVLTLFGYL) form a helical membrane-spanning segment. N6-(pyridoxal phosphate)lysine is present on lysine 379.

It belongs to the class-II pyridoxal-phosphate-dependent aminotransferase family. As to quaternary structure, component of the serine palmitoyltransferase (SPT) complex, which is composed of SPTLC1, SPTLC2 or SPTLC3 and SPTSSA or SPTSSB. The heterodimer consisting of SPTLC1 and SPTLC2/SPTLC3 forms the catalytic core of the enzyme, while SPTSSA or SPTSSB subunits determine substrate specificity. SPT also interacts with ORMDL proteins, especially ORMDL3, which negatively regulate SPT activity in the presence of ceramides. Forms dimers of heterodimers with SPTLC1. The cofactor is pyridoxal 5'-phosphate. As to expression, widely expressed.

It is found in the endoplasmic reticulum membrane. It carries out the reaction L-serine + hexadecanoyl-CoA + H(+) = 3-oxosphinganine + CO2 + CoA. The catalysed reaction is octadecanoyl-CoA + L-serine + H(+) = 3-oxoeicosasphinganine + CO2 + CoA. It functions in the pathway lipid metabolism; sphingolipid metabolism. Its activity is regulated as follows. SPT complex catalytic activity is negatively regulated by ORMDL proteins, including ORMDL3, in the presence of ceramides. This mechanism allows to maintain ceramide levels at sufficient concentrations for the production of complex sphingolipids, but which prevents the accumulation of ceramides to levels that trigger apoptosis. Its function is as follows. Component of the serine palmitoyltransferase multisubunit enzyme (SPT) that catalyzes the initial and rate-limiting step in sphingolipid biosynthesis by condensing L-serine and activated acyl-CoA (most commonly palmitoyl-CoA) to form long-chain bases. The SPT complex is composed of SPTLC1, SPTLC2 or SPTLC3 and SPTSSA or SPTSSB. Within this complex, the heterodimer consisting of SPTLC1 and SPTLC2/SPTLC3 forms the catalytic core. The composition of the serine palmitoyltransferase (SPT) complex determines the substrate preference. The SPTLC1-SPTLC2-SPTSSA complex shows a strong preference for C16-CoA substrate, while the SPTLC1-SPTLC3-SPTSSA isozyme uses both C14-CoA and C16-CoA as substrates, with a slight preference for C14-CoA. The SPTLC1-SPTLC2-SPTSSB complex shows a strong preference for C18-CoA substrate, while the SPTLC1-SPTLC3-SPTSSB isozyme displays an ability to use a broader range of acyl-CoAs, without apparent preference. Crucial for adipogenesis. The polypeptide is Serine palmitoyltransferase 2 (Homo sapiens (Human)).